Reading from the N-terminus, the 410-residue chain is Phthiocerol/phthiodiolone dimycocerosyl transferase (410 aa).

The active-site Proton acceptor is the His-118.

The protein belongs to the acyltransferase PapA5 family. Monomer. Interacts directly with the acyl carrier protein (ACP) domain of the mycocerosic acid synthase (mas) protein.

The catalysed reaction is 2 a mycocerosyl-[mycocerosic acid synthase] + a phthiocerol = a dimycocerosyl phthiocerol + 2 holo-[mycocerosic acid synthase].. The enzyme catalyses 2 a mycocerosyl-[mycocerosic acid synthase] + a phthiodiolone = a dimycocerosyl phthiodiolone + 2 holo-[mycocerosic acid synthase].. It catalyses the reaction 2 a mycocerosyl-[mycocerosic acid synthase] + a phenolphthiocerol = a dimycocerosyl phenolphthiocerol + 2 holo-[mycocerosic acid synthase].. Catalyzes diesterification of phthiocerol, phthiodiolone, and phenolphthiocerol with mycocerosic acids, the final step in the phthiocerol, phthiodiolone and phenolphthiocerol dimycocerosate esters (PDIM) synthesis. Can directly transfer the mycocerosate bound to the mycocerosic acid synthase (mas) onto the substrate alcohols. The sequence is that of Phthiocerol/phthiodiolone dimycocerosyl transferase (papA5) from Mycobacterium sp. (strain JLS).